Here is a 634-residue protein sequence, read N- to C-terminus: CRISPR-associated protein MJ1674 (634 aa).

In terms of biological role, CRISPR (clustered regularly interspaced short palindromic repeat) is an adaptive immune system that provides protection against mobile genetic elements (viruses, transposable elements and conjugative plasmids). CRISPR clusters contain spacers, sequences complementary to antecedent mobile elements, and target invading nucleic acids. CRISPR clusters are transcribed and processed into CRISPR RNA (crRNA). The type III Csm effector complex binds crRNA and acts as a crRNA-guided RNase, DNase and cyclic oligoadenylate synthase; binding of target RNA cognate to the crRNA is required for all activities. The protein is CRISPR-associated protein MJ1674 of Methanocaldococcus jannaschii (strain ATCC 43067 / DSM 2661 / JAL-1 / JCM 10045 / NBRC 100440) (Methanococcus jannaschii).